Here is a 79-residue protein sequence, read N- to C-terminus: Beta-defensin 130 (79 aa).

A signal peptide spans 1–22 (MKLHSLISVLLLFVTLIPKGKT). Intrachain disulfides connect Cys-38/Cys-53 and Cys-43/Cys-60.

This sequence belongs to the beta-defensin family.

It is found in the secreted. In terms of biological role, antimicrobial host-defense peptide. This Pan troglodytes (Chimpanzee) protein is Beta-defensin 130.